Consider the following 61-residue polypeptide: UPF0434 protein TM1040_0056 (61 aa).

This sequence belongs to the UPF0434 family.

The protein is UPF0434 protein TM1040_0056 of Ruegeria sp. (strain TM1040) (Silicibacter sp.).